Here is a 685-residue protein sequence, read N- to C-terminus: Stromal interaction molecule 1 (685 aa).

The N-terminal stretch at 1 to 22 (MDVCARLALWLLWGLLLHQGQS) is a signal peptide. At 23–213 (LSHSHSEKNT…LLTRHNHLKD (191 aa)) the chain is on the extracellular side. The segment at 24-43 (SHSHSEKNTGASSGATSEES) is disordered. Residues 32-41 (TGASSGATSE) show a composition bias toward low complexity. EF-hand domains lie at 64 to 97 (SFEA…EDLN) and 102 to 126 (TVKH…AWKS). Positions 76, 78, 80, 82, and 87 each coordinate Ca(2+). N-linked (GlcNAc...) asparagine glycans are attached at residues Asn131 and Asn171. An SAM domain is found at 132-200 (WTVDEVIQWL…QLKALDTVLF (69 aa)). The helical transmembrane segment at 214-234 (FMLVVSIVIGVGGCWFAYIQN) threads the bilayer. Residues 235–685 (RYSKEHMKKM…LKIFKKPLKK (451 aa)) lie on the Cytoplasmic side of the membrane. Positions 248-442 (LEGLHRAEQS…IEILCGFQIV (195 aa)) form a coiled coil. The residue at position 257 (Ser257) is a Phosphoserine. Residues 344–442 (PEALQKWLQL…IEILCGFQIV (99 aa)) are SOAR/CAD. The interval 475 to 483 (DDVDDMDEE) is contributes to fast Ca(2+)-dependent inactivation of CRAC channels. Residues 490-499 (MQSPSLQSSV) show a composition bias toward low complexity. Residues 490 to 541 (MQSPSLQSSVRQRLTEPQLGLGSQRDLTHSDSESSLHMSDRQRVAPKPPQMG) form a disordered region. Residue Thr504 is modified to Phosphothreonine. Ser512 carries the phosphoserine modification. Residues 515-532 (DLTHSDSESSLHMSDRQR) show a composition bias toward basic and acidic residues. Thr517 is subject to Phosphothreonine. Ser519, Ser521, Ser523, Ser524, Ser567, Ser575, Ser602, Ser608, Ser618, Ser621, and Ser628 each carry phosphoserine. Residues 596–685 (LMELNPSVPP…LKIFKKPLKK (90 aa)) are disordered. A compositionally biased stretch (low complexity) spans 608-620 (SPLLDSSHSLSPS). The Microtubule tip localization signal signature appears at 642-645 (TRIP). Acidic residues predominate over residues 655–666 (EEDNGSIGEETD). Ser660 is subject to Phosphoserine. Phosphothreonine is present on Thr665. The residue at position 668 (Ser668) is a Phosphoserine. Residues 670-685 (GRKKFPLKIFKKPLKK) show a composition bias toward basic residues. The interval 672 to 685 (KKFPLKIFKKPLKK) is required for generation of inwardly rectifying CRAC currents.

In terms of assembly, monomer in the presence of Ca(2+). It oligomerizes in absence of Ca(2+). Forms homooligomers and heterooligomers with STIM2. Interacts with pore-forming subunits of CRAC channels, ORAI1, ORAI2 and ORAI3; this interaction is potentiated upon Ca(2+) store depletion. Interacts (via the transmembrane region and the SOAR/CAD domain) with SPPL3; the interaction promotes the binding of STIM1 to ORAI1. Interacts with ORAI1. Interacts with MAPRE1; probably required for targeting to the growing microtubule plus ends. Interacts with CRACR2A/EFCAB4B; the interaction is direct and takes place in absence of Ca(2+). Forms a complex with CRACR2A/EFCAB4B and ORAI1 at low concentration of Ca(2+), the complex dissociates at elevated Ca(2+) concentrations. Interacts with SARAF, promoting a slow inactivation of STIM1-dependent SOCE activity, possibly by facilitating the deoligomerization of STIM1. Interacts with EFHB; the interaction takes place upon Ca(2+)-store depletion and inhibits the association with SARAF. Interacts with ASPH. Interacts with SLC35G1; intracellular Ca(2+)-dependent. May interact with ATP1A1, ATP2A2, ATP2B1, ATP2B4, KPNB1 and XPO1; through SLC35G1. Interacts with STIMATE, promoting STIM1 conformational switch. Interacts with TMEM178A. Interacts with CASQ1 (via C-terminal end and preferentially with the monomeric form); this interaction increases in response to a depletion of intracellular Ca(2+), decreases both STIM1 aggregation and clustering, interaction of STIM1 with ORAI1 and store-operated Ca(2+) entry (SOCE) activity. Interacts with ADCY8. Interacts with TMEM203. Post-translationally, glycosylation is required for cell surface expression. Phosphorylated predominantly on Ser residues. Expressed in maturation-stage ameloblasts (at protein level). Expressed in all tissues examined and in many cell types, including bone marrow stroma, fibroblast, B-cell precursors, lymphoma and erythroleukemia.

It is found in the cell membrane. The protein localises to the endoplasmic reticulum membrane. The protein resides in the sarcoplasmic reticulum. It localises to the cytoplasm. Its subcellular location is the cytoskeleton. Functionally, acts as a Ca(2+) sensor that gates two major inward rectifying Ca(2+) channels at the plasma membrane: Ca(2+) release-activated Ca(2+) (CRAC) channels and arachidonate-regulated Ca(2+)-selective (ARC) channels. Plays a role in mediating store-operated Ca(2+) entry (SOCE), a Ca(2+) influx following depletion of intracellular Ca(2+) stores. Upon Ca(2+) depletion, translocates from the endoplasmic reticulum to the plasma membrane where it activates CRAC channel pore-forming subunits ORA1, ORA2 and ORAI3 to generate sustained and oscillatory Ca(2+) entry. Involved in enamel formation. The polypeptide is Stromal interaction molecule 1 (Stim1) (Mus musculus (Mouse)).